Reading from the N-terminus, the 226-residue chain is Probable endonuclease LCL3 (226 aa).

The chain crosses the membrane as a helical span at residues 15-32; sequence VFYTSILTGGILSSFYVY. The 160-residue stretch at 53–212 folds into the TNase-like domain; it reads RTLFGRVTSV…RKKKIGMFQQ (160 aa). Arg103 is an active-site residue. Asp108 contacts Ca(2+). Residues Glu111 and Arg151 contribute to the active site.

The protein belongs to the LCL3 family.

It is found in the mitochondrion. Its subcellular location is the membrane. The polypeptide is Probable endonuclease LCL3 (LCL3) (Yarrowia lipolytica (strain CLIB 122 / E 150) (Yeast)).